The primary structure comprises 354 residues: Isocitrate dehydrogenase [NAD] regulatory subunit A, mitochondrial (354 aa).

The substrate site is built by serine 95, asparagine 97, arginine 101, arginine 111, and arginine 132. 3 residues coordinate Mg(2+): aspartate 219, aspartate 243, and aspartate 247. NADP(+)-binding positions include 276-282 and asparagine 289; that span reads HGTAPDI.

Belongs to the isocitrate and isopropylmalate dehydrogenases family. As to quaternary structure, heterooligomer of catalytic and regulatory subunits. Requires Mg(2+) as cofactor. It depends on Mn(2+) as a cofactor.

It localises to the mitochondrion. It carries out the reaction D-threo-isocitrate + NAD(+) = 2-oxoglutarate + CO2 + NADH. Its function is as follows. Performs an essential role in the oxidative function of the citric acid cycle. This is Isocitrate dehydrogenase [NAD] regulatory subunit A, mitochondrial (idhA) from Dictyostelium discoideum (Social amoeba).